A 409-amino-acid polypeptide reads, in one-letter code: Arginine deiminase (409 aa).

The active-site Amidino-cysteine intermediate is Cys-399.

Belongs to the arginine deiminase family.

Its subcellular location is the cytoplasm. It carries out the reaction L-arginine + H2O = L-citrulline + NH4(+). The protein operates within amino-acid degradation; L-arginine degradation via ADI pathway; carbamoyl phosphate from L-arginine: step 1/2. The protein is Arginine deiminase (arcA) of Latilactobacillus sakei (Lactobacillus sakei).